A 173-amino-acid polypeptide reads, in one-letter code: Crossover junction endodeoxyribonuclease RuvC (173 aa).

Catalysis depends on residues D8, E67, and D139. Positions 8, 67, and 139 each coordinate Mg(2+).

The protein belongs to the RuvC family. Homodimer which binds Holliday junction (HJ) DNA. The HJ becomes 2-fold symmetrical on binding to RuvC with unstacked arms; it has a different conformation from HJ DNA in complex with RuvA. In the full resolvosome a probable DNA-RuvA(4)-RuvB(12)-RuvC(2) complex forms which resolves the HJ. Mg(2+) is required as a cofactor.

Its subcellular location is the cytoplasm. The enzyme catalyses Endonucleolytic cleavage at a junction such as a reciprocal single-stranded crossover between two homologous DNA duplexes (Holliday junction).. Functionally, the RuvA-RuvB-RuvC complex processes Holliday junction (HJ) DNA during genetic recombination and DNA repair. Endonuclease that resolves HJ intermediates. Cleaves cruciform DNA by making single-stranded nicks across the HJ at symmetrical positions within the homologous arms, yielding a 5'-phosphate and a 3'-hydroxyl group; requires a central core of homology in the junction. The consensus cleavage sequence is 5'-(A/T)TT(C/G)-3'. Cleavage occurs on the 3'-side of the TT dinucleotide at the point of strand exchange. HJ branch migration catalyzed by RuvA-RuvB allows RuvC to scan DNA until it finds its consensus sequence, where it cleaves and resolves the cruciform DNA. In Proteus mirabilis (strain HI4320), this protein is Crossover junction endodeoxyribonuclease RuvC.